The following is a 141-amino-acid chain: Large-conductance mechanosensitive channel (141 aa).

The next 2 membrane-spanning stretches (helical) occupy residues 21–41 (VGVI…GDLI) and 85–105 (GSFL…FMMV).

The protein belongs to the MscL family. Homopentamer.

It localises to the cell inner membrane. Channel that opens in response to stretch forces in the membrane lipid bilayer. May participate in the regulation of osmotic pressure changes within the cell. The protein is Large-conductance mechanosensitive channel of Dechloromonas aromatica (strain RCB).